The primary structure comprises 279 residues: Lacto-N-neotetraose biosynthesis glycosyltransferase LgtB (279 aa).

Belongs to the glycosyltransferase 25 family.

The protein operates within glycan metabolism; lacto-N-neotetraose biosynthesis. Its pathway is bacterial outer membrane biogenesis; lipooligosaccharide biosynthesis. Functionally, adds the second galactose to the lacto-N-tetraose chain in lipooligosaccharide (LOS). The polypeptide is Lacto-N-neotetraose biosynthesis glycosyltransferase LgtB (lgtB) (Neisseria gonorrhoeae).